The chain runs to 250 residues: Protein orai-2 (250 aa).

Helical transmembrane passes span 66-83, 94-114, 148-168, and 192-212; these read TSAL…EVQL, LIAF…ALLI, LAWG…VVLL, and AALV…VFTI.

Belongs to the Orai family. Oligomerizes in homomeric and heteromeric ORAI complexes. Native CRAC channels most likely consist of hexameric ORAI heteromers, implying that diverse ORAI1, ORAI2 and ORAI3 subunit combinations with distinct biophysical properties can operate in a cell-type specific way. Interacts with STIM1; this regulates channel activity. Interacts with CRACR2A/EFCAB4B.

It is found in the cell membrane. The enzyme catalyses Ca(2+)(in) = Ca(2+)(out). Its activity is regulated as follows. CRAC channels are regulated by fast Ca(2+)-dependent inactivation (FCDI), a mechanism that limits Ca(2+) influx and cell toxicity. ORAI2 channels display prominent FCDI. Inhibited by lanthanides such as Gd(3+) ions. Its function is as follows. Pore-forming subunit of inward rectifying Ca(2+) release-activated Ca(2+) (CRAC) channels. Assembles with ORAI1 and ORAI3 to form hexameric CRAC channels that mediate Ca(2+) influx upon depletion of endoplasmic reticulum Ca(2+) store and channel activation by Ca(2+) sensor STIM1, a process known as store-operated Ca(2+) entry (SOCE). Various pore subunit combinations may account for distinct CRAC channel spatiotemporal and cell-type specific dynamics. ORAI1 mainly contributes to the generation of Ca(2+) plateaus involved in sustained Ca(2+) entry and is dispensable for cytosolic Ca(2+) oscillations, whereas ORAI2 and ORAI3 generate oscillatory patterns. CRAC channels assemble in Ca(2+) signaling microdomains where Ca(2+) influx is coupled to calmodulin and calcineurin signaling and activation of NFAT transcription factors recruited to ORAI1 via AKAP5. CRAC channels are the main pathway for Ca(2+) influx in T cells and promote the immune response to pathogens by activating NFAT-dependent cytokine and chemokine transcription. This is Protein orai-2 (Orai2) from Mus musculus (Mouse).